A 56-amino-acid chain; its full sequence is Large ribosomal subunit protein bL32 (56 aa).

Residues 1 to 56 are disordered; the sequence is MAVQQNRKTRSKRGMRRSHDALSAPTLSQDKETGTTHRRHHVAPDGFYRGRKVVDV. Basic residues predominate over residues 7-16; that stretch reads RKTRSKRGMR.

Belongs to the bacterial ribosomal protein bL32 family.

This Chromohalobacter salexigens (strain ATCC BAA-138 / DSM 3043 / CIP 106854 / NCIMB 13768 / 1H11) protein is Large ribosomal subunit protein bL32.